The primary structure comprises 291 residues: 33 kDa chaperonin (291 aa).

2 disulfide bridges follow: C237-C239 and C270-C273.

This sequence belongs to the HSP33 family. Under oxidizing conditions two disulfide bonds are formed involving the reactive cysteines. Under reducing conditions zinc is bound to the reactive cysteines and the protein is inactive.

The protein resides in the cytoplasm. Functionally, redox regulated molecular chaperone. Protects both thermally unfolding and oxidatively damaged proteins from irreversible aggregation. Plays an important role in the bacterial defense system toward oxidative stress. The polypeptide is 33 kDa chaperonin (Bacillus cytotoxicus (strain DSM 22905 / CIP 110041 / 391-98 / NVH 391-98)).